We begin with the raw amino-acid sequence, 4226 residues long: Guanylate cyclase alpha (4226 aa).

Over 1–104 (MSDSKKHYNE…SFIFKGLYEQ (104 aa)) the chain is Cytoplasmic. A helical transmembrane segment spans residues 105–125 (FLRLPNIWFLLISLLEFIPQY). At 126–131 (QNLSNY) the chain is on the extracellular side. Asparagine 127 is a glycosylation site (N-linked (GlcNAc...) asparagine). Residues 132 to 152 (MYYSKHSSFFLLLFFICVSII) form a helical membrane-spanning segment. At 153-337 (KNIYEDSRRS…LGYVNKELNS (185 aa)) the chain is on the cytoplasmic side. The chain crosses the membrane as a helical span at residues 338–358 (YTIIGLIFTFICVFISVLFKW). At 359 to 392 (TEDDKFRNGSHFFLITVKDNICESIVKYTLLYSN) the chain is on the extracellular side. The N-linked (GlcNAc...) asparagine glycan is linked to asparagine 366. A helical transmembrane segment spans residues 393–413 (IIPISILISVDLISILQSILI). Residues 414–2083 (ENDNHISTFE…FIYGSKHLYT (1670 aa)) lie on the Cytoplasmic side of the membrane. Disordered stretches follow at residues 552 to 572 (EHSQTLDNNNNNDNNNNNNIC), 832 to 904 (SSKN…SNND), 968 to 989 (INNNNNNNNDQKTNNLKYKSSS), and 1740 to 1765 (NINKNYKYDKNDKHNNNNNNNNNNSN). Over residues 558-570 (DNNNNNDNNNNNN) the composition is skewed to low complexity. Over residues 838 to 847 (TLDDPTELIS) the composition is skewed to acidic residues. The span at 854–873 (LRDKYEHTSDKKNDTNKNRD) shows a compositional bias: basic and acidic residues. Positions 874-904 (GANNSNNNNNKDVSNNKNKNNNNYNYNSNND) are enriched in low complexity. A compositionally biased stretch (basic and acidic residues) spans 1745–1754 (YKYDKNDKHN). Over residues 1755 to 1765 (NNNNNNNNNSN) the composition is skewed to low complexity. A helical membrane pass occupies residues 2084–2104 (ISIILYWNFFKNILLILPIFF). Residues 2105-2119 (YQAYASWSCVKIYPE) lie on the Extracellular side of the membrane. A helical membrane pass occupies residues 2120–2140 (LLYTFFSIFWVFIPIIYYMFL). The Cytoplasmic portion of the chain corresponds to 2141-2169 (QHNLNYDILYNIPLFYALSRRRYNMNCFK). Residues 2170 to 2190 (FLPWIFEAIFYSMIIYFFAYA) traverse the membrane as a helical segment. Over 2191–2202 (ALKENSHLNNGE) the chain is Extracellular. A helical transmembrane segment spans residues 2203–2223 (VITINTFGNICFIGCLLISIL). The Cytoplasmic segment spans residues 2224–2235 (RLFLEGSLWSPS). The helical transmembrane segment at 2236–2256 (ILITCFGCFLFVFFPSLLFIC) threads the bilayer. The Extracellular segment spans residues 2257–2275 (FAYLSNEYIREVFRQTFLW). Residues 2276–2296 (APLYVLLILWFSTCIISYIFI) traverse the membrane as a helical segment. Residues 2297–2787 (NFTKSILFPN…QIHKKNKFYK (491 aa)) lie on the Cytoplasmic side of the membrane. Positions 2477–2505 (NNDNNNDDNDNDNNNNNNNNDNYNNNDHN) are disordered. A compositionally biased stretch (low complexity) spans 2488 to 2502 (DNNNNNNNNDNYNNN). Residues 2788-2808 (TFTPWYRFIFLLLGVFFLYVW) form a helical membrane-spanning segment. Over 2809 to 2828 (KLESSLSQLWNMPSDASTDV) the chain is Extracellular. Residues 2829–2849 (FILFLSLLLELVLLAATVTTF) traverse the membrane as a helical segment. Over 2850–2860 (FSNIFIENFNK) the chain is Cytoplasmic. The chain crosses the membrane as a helical span at residues 2861-2881 (IISAVVILIITYHVVSYSVTH). The Extracellular portion of the chain corresponds to 2882-2900 (IDGVFQAVLFPLYTFVILR). The chain crosses the membrane as a helical span at residues 2901–2921 (LPFVNAVLCNIIFLGLFIIRF). Residues 2922 to 2930 (NGDHFLDKK) are Cytoplasmic-facing. The chain crosses the membrane as a helical span at residues 2931–2951 (GLAHYIPLFIGVDVFVGFVGY). Residues 2952 to 3008 (RLEYNQRKNFLLEYSVESSRRKQREILNTMLPPFVVDEMIYSELNEEGIPISLKAED) lie on the Extracellular side of the membrane. The chain crosses the membrane as a helical span at residues 3009–3029 (ISTVTIIFCDIYDFQNIVASI). The region spanning 3013–3270 (TIIFCDIYDF…DTVNTASRMK (258 aa)) is the Guanylate cyclase 1 domain. Over 3030-3738 (EPTRLVEVLD…SNINSIEQAL (709 aa)) the chain is Cytoplasmic. Disordered regions lie at residues 3077–3150 (EDEL…FEED) and 3201–3230 (DANDDTHNVNDSFNNDKAENDNTNTDNNKP). Low complexity-rich tracts occupy residues 3083-3098 (NKYSNNNKNNNNNYYY) and 3108-3138 (NNNNNNNNNNNNNNNNNNNNLNNNNNNNNVN). The segment covering 3140 to 3150 (SDDDGDFFEED) has biased composition (acidic residues). The span at 3201–3220 (DANDDTHNVNDSFNNDKAEN) shows a compositional bias: basic and acidic residues. A helical membrane pass occupies residues 3739-3759 (IIFLVTFVMQTLISSTVSIVF). Residues 3760–3773 (IDHKRATQTLHINY) lie on the Extracellular side of the membrane. A helical transmembrane segment spans residues 3774–3794 (FAYWSVRSVYTFFGFVLWLLF). The Cytoplasmic portion of the chain corresponds to 3795–3811 (HYRTRPEVSSLLNIKWM). Residues 3812-3832 (IFFLNLLFISAACVFSIAYLW) form a helical membrane-spanning segment. Topologically, residues 3833–3840 (AISETDQT) are extracellular. Residues 3841-3861 (TSYTIWMTNDTIEFFFYLVIL) form a helical membrane-spanning segment. Over 3862-3871 (HHNTGMLFQT) the chain is Cytoplasmic. A helical membrane pass occupies residues 3872–3892 (CILVDLLFITMSLTFIATSVV). Position 3893 (lysine 3893) is a topological domain, extracellular. The helical transmembrane segment at 3894-3914 (TITTDSTVLLIPWYVAFNLIS) threads the bilayer. Topologically, residues 3915 to 4226 (TYCKESIDRR…INVNDRQSNL (312 aa)) are cytoplasmic. The 135-residue stretch at 3970-4104 (TFLFADICGF…IDVLTGNLME (135 aa)) folds into the Guanylate cyclase 2 domain. Aspartate 3975, isoleucine 3976, and aspartate 4019 together coordinate Mg(2+).

In the N-terminal section; belongs to the cation transport ATPase (P-type) (TC 3.A.3) family. Type IV subfamily. This sequence in the C-terminal section; belongs to the adenylyl cyclase class-4/guanylyl cyclase family. Mg(2+) is required as a cofactor. Mn(2+) serves as cofactor.

It is found in the cell membrane. It localises to the cytoplasmic vesicle membrane. It carries out the reaction GTP = 3',5'-cyclic GMP + diphosphate. Catalyzes the synthesis of the second messenger cGMP from GTP. In asexual blood stage schizonts, required for cGMP production which is essential for PKG activation, PKG-dependent Ca(2+) release, and ultimately merozoite egress from host erythrocytes. The sequence is that of Guanylate cyclase alpha from Plasmodium falciparum (isolate 3D7).